A 1538-amino-acid chain; its full sequence is Phenolphthiocerol/phthiocerol polyketide synthase subunit B (1538 aa).

The Ketosynthase family 3 (KS3) domain occupies 33–455 (AEPVAVVGIG…GTNAHVIIEQ (423 aa)). Residues cysteine 205, histidine 340, and histidine 377 each act as for beta-ketoacyl synthase activity in the active site. Positions 553–882 (DGSPGPGTVF…TNLYTADIAH (330 aa)) are acyltransferase. Residue serine 649 is the For malonyltransferase activity of the active site. 1153-1196 (SQLVIGATGNIGPHLIRQLARMGAKTIVAMARKPGALDELTQCL) serves as a coordination point for NADP(+). A beta-ketoacyl reductase region spans residues 1153–1328 (SQLVIGATGN…TVVDWGLWKS (176 aa)). One can recognise a Carrier domain in the interval 1423 to 1498 (DMLFDHVGAL…SLTDYLATVL (76 aa)). An O-(pantetheine 4'-phosphoryl)serine modification is found at serine 1458.

NADP(+) is required as a cofactor. The cofactor is pantetheine 4'-phosphate.

It carries out the reaction icosanoyl-[(phenol)carboxyphthiodiolenone synthase] + 2 (S)-methylmalonyl-CoA + 3 malonyl-CoA + 5 NADPH + 10 H(+) = C32-carboxyphthiodiolenone-[(phenol)carboxyphthiodiolenone synthase] + 5 CO2 + 5 NADP(+) + 5 CoA + 2 H2O. It catalyses the reaction docosanoyl-[(phenol)carboxyphthiodiolenone synthase] + 2 (S)-methylmalonyl-CoA + 3 malonyl-CoA + 5 NADPH + 10 H(+) = C34-carboxyphthiodiolenone-[(phenol)carboxyphthiodiolenone synthase] + 5 CO2 + 5 NADP(+) + 5 CoA + 2 H2O. The catalysed reaction is 17-(4-hydroxyphenyl)heptadecanoyl-[(phenol)carboxyphthiodiolenone synthase] + 2 (S)-methylmalonyl-CoA + 3 malonyl-CoA + 5 NADPH + 10 H(+) = C35-(phenol)carboxyphthiodiolenone-[(phenol)carboxyphthiodiolenone synthase] + 5 CO2 + 5 NADP(+) + 5 CoA + 2 H2O. The enzyme catalyses 19-(4-hydroxyphenyl)nonadecanoyl-[(phenol)carboxyphthiodiolenone synthase] + 2 (S)-methylmalonyl-CoA + 3 malonyl-CoA + 5 NADPH + 10 H(+) = C37-(phenol)carboxyphthiodiolenone-[(phenol)carboxyphthiodiolenone synthase] + 5 CO2 + 5 NADP(+) + 5 CoA + 2 H2O. It participates in lipid metabolism; fatty acid biosynthesis. Functionally, part of the PpsABCDE complex involved in the biosynthesis of the lipid core common to phthiocerols and phenolphthiocerols by successive additions of malonyl-CoA or methylmalonyl-CoA extender units. PpsA can accept as substrate the activated forms of either icosanoyl (C20), docosanoyl (C22) or lignoceroyl (C24) groups from FadD26, or a (4-hydroxyphenyl)-C17 or (4-hydroxyphenyl)-C19 fatty acyl from FadD29. PpsA initiates the biosynthesis and extends its substrate using a malonyl-CoA extender unit. The PpsB and PpsC proteins add the second and third malonyl-CoA extender units. PpsD adds an (R)-methylmalonyl unit and PpsE adds a second (R)-methylmalonyl unit. The incorporation of the methylmalonyl units results in formation of two branched methyl groups in the elongated product. The protein is Phenolphthiocerol/phthiocerol polyketide synthase subunit B (ppsB) of Mycobacterium bovis (strain ATCC BAA-935 / AF2122/97).